A 669-amino-acid polypeptide reads, in one-letter code: Phosphatidylinositol-3-phosphate phosphatase MTMR1 (669 aa).

The residue at position 1 (M1) is an N-acetylmethionine. A compositionally biased stretch (low complexity) spans M1–E17. Residues M1–T55 are disordered. Residues S47 and S53 each carry the phosphoserine modification. The GRAM domain maps to N94–G165. The Myotubularin phosphatase domain occupies G230–Y605. Positions 355, 380, and 381 each coordinate a 1,2-diacyl-sn-glycero-3-phospho-(1D-myo-inositol-3-phosphate). C442 functions as the Phosphocysteine intermediate in the catalytic mechanism. 7 residues coordinate a 1,2-diacyl-sn-glycero-3-phospho-(1D-myo-inositol-3-phosphate): S443, D444, G445, W446, D447, R448, and R488. S443 is a binding site for phosphate. Phosphate-binding residues include G445, W446, D447, and R448. The segment at M612–V669 is required for dimerization. Residues A644–V669 are disordered. The segment covering S649 to S661 has biased composition (low complexity).

It belongs to the protein-tyrosine phosphatase family. Non-receptor class myotubularin subfamily. As to quaternary structure, homodimer. Widely expressed. Detected in skeletal muscle, heart, lung, liver and brain.

Its subcellular location is the cell membrane. It localises to the cytoplasm. It carries out the reaction a 1,2-diacyl-sn-glycero-3-phospho-(1D-myo-inositol-3-phosphate) + H2O = a 1,2-diacyl-sn-glycero-3-phospho-(1D-myo-inositol) + phosphate. It catalyses the reaction 1,2-dioctanoyl-sn-glycero-3-phospho-(1-D-myo-inositol-3-phosphate) + H2O = 1,2-dioctanoyl-sn-glycero-3-phospho-(1D-myo-inositol) + phosphate. The enzyme catalyses a 1,2-diacyl-sn-glycero-3-phospho-(1D-myo-inositol-3,5-bisphosphate) + H2O = a 1,2-diacyl-sn-glycero-3-phospho-(1D-myo-inositol-5-phosphate) + phosphate. Its function is as follows. Lipid phosphatase that specifically dephosphorylates the D-3 position of phosphatidylinositol 3-phosphate, generating phosphatidylinositol. Could also dephosphorylate phosphatidylinositol 3,5-bisphosphate to produce phosphatidylinositol 5-phosphate. The protein is Phosphatidylinositol-3-phosphate phosphatase MTMR1 of Mus musculus (Mouse).